Consider the following 210-residue polypeptide: Adenylate kinase (210 aa).

Position 10–15 (10–15) interacts with ATP; the sequence is GSGKGT. Residues 30–59 are NMP; sequence STGDLFRANISNATPLGKEIKQIVENGQLV. AMP contacts are provided by residues Thr-31, Arg-36, 57–59, 85–88, and Gln-92; these read QLV and GFPR. The segment at 121–158 is LID; sequence GRRICQSCGGIFNIYTLPTKEKGICDLCKGSLYQRKDD. Position 122 (Arg-122) interacts with ATP. Zn(2+) is bound by residues Cys-125 and Cys-128. 131-132 is a binding site for ATP; it reads IF. Zn(2+) contacts are provided by Cys-145 and Cys-148. Arg-155 and Arg-166 together coordinate AMP. Lys-194 contacts ATP.

The protein belongs to the adenylate kinase family. Monomer.

The protein resides in the cytoplasm. The catalysed reaction is AMP + ATP = 2 ADP. It participates in purine metabolism; AMP biosynthesis via salvage pathway; AMP from ADP: step 1/1. Catalyzes the reversible transfer of the terminal phosphate group between ATP and AMP. Plays an important role in cellular energy homeostasis and in adenine nucleotide metabolism. This is Adenylate kinase from Borrelia turicatae (strain 91E135).